Reading from the N-terminus, the 340-residue chain is MEF2 transcription factor homolog (340 aa).

Residues 1-61 (MGRKKIQITR…NKLFQYASTD (61 aa)) form the MADS-box domain. 4 disordered regions span residues 90-112 (RKEGNQGGGNSDDESPGPSTSPV), 193-217 (NQRNDPLSSTSVAPSSSSSKHLDFP), 258-283 (LQQRPVSQPAPSISNSSTNGISNGTS), and 312-340 (PNTYVKMEPHSPPEKRPRITTEWRPQQLT). A compositionally biased stretch (low complexity) spans 200–211 (SSTSVAPSSSSS). The segment covering 258-268 (LQQRPVSQPAP) has biased composition (polar residues). A compositionally biased stretch (low complexity) spans 269 to 283 (SISNSSTNGISNGTS). A compositionally biased stretch (basic and acidic residues) spans 318–332 (MEPHSPPEKRPRITT).

Belongs to the MEF2 family. In terms of assembly, interacts with histone deacetylase hda-4 isoform b.

The protein localises to the nucleus. In terms of biological role, transcription regulator. Binds specifically to the MEF2 element, 5'-[TC]TA[AT][AT][AT][AT]TA[AG]-3' in the regulatory elements of target genes, such as chemoreceptors str-1 and srh-234. Involved in transduction of sensory signals, together with egl-4, kin-29 and hda-4; binding to histone deacetylase hda-4 enables negative modulation of chemoreceptor gene expression in chemosensory neurons. In response to starvation, negatively modulates expression of chemoreceptor srh-234 in ADL sensory neurons, acting in concert with basic helix-loop-helix (bHLH) transcription factors. Plays a role in regulating muscle sensitivity to acetylcholine (ACh) and the magnitude of presynaptic ACh release via a retrograde signal, perhaps by indirectly decreasing Ras-related protein Rab-3 activity. The protein is MEF2 transcription factor homolog of Caenorhabditis elegans.